An 864-amino-acid polypeptide reads, in one-letter code: Protein 4.1 (864 aa).

Composition is skewed to polar residues over residues 1 to 16 and 27 to 41; these read MTTEKSLVTEAENSQH and NSGQQEPQQEESCQT. 3 disordered regions span residues 1–122, 136–170, and 182–202; these read MTTE…GTSL, EPELKTDPSLDLHSLSSAETQPAQEELREDPDFEI, and IEVKEESPQSKAETELKASQK. Ser14 bears the Phosphoserine mark. Residue Thr60 is modified to Phosphothreonine; by CDK1. A compositionally biased stretch (basic and acidic residues) spans 61 to 75; sequence PTHEDLTKNKERTSE. Positions 76 to 87 are enriched in low complexity; that stretch reads SRGLSRLFSSFL. A phosphoserine mark is found at Ser84, Ser85, Ser95, Ser104, Ser121, Ser149, Ser151, Ser152, Ser188, and Ser191. The span at 101–117 shows a compositional bias: basic and acidic residues; that stretch reads EVESDKEKGEGGQKEIE. Polar residues predominate over residues 149–158; that stretch reads SLSSAETQPA. The span at 182 to 199 shows a compositional bias: basic and acidic residues; it reads IEVKEESPQSKAETELKA. Residues 210–491 form the FERM domain; it reads MHCKVSLLDD…EHHTFFRLTS (282 aa). Position 222 is a phosphotyrosine (Tyr222). The residue at position 378 (Thr378) is a Phosphothreonine. Residues 494–614 are hydrophilic; the sequence is TIPKSKFLAL…QAEPEPTEAW (121 aa). Disordered stretches follow at residues 518-572 and 586-611; these read RQAS…VAEG and KAQKETVKAEVKKEDEPPEQAEPEPT. Phosphoserine occurs at positions 521, 540, 542, and 555. Residues 587 to 600 are compositionally biased toward basic and acidic residues; the sequence is AQKETVKAEVKKED. Residues 601-610 show a composition bias toward acidic residues; that stretch reads EPPEQAEPEP. The spectrin--actin-binding stretch occupies residues 615 to 713; that stretch reads KVEKTHIEVT…WDKRLSTHSP (99 aa). At Tyr660 the chain carries Phosphotyrosine; by EGFR. Ser664, Ser674, Ser684, and Ser709 each carry phosphoserine. Ser712 carries the phosphoserine; by CDK1 modification. A C-terminal (CTD) region spans residues 714 to 864; it reads FRTLNINGQI…VHQETEIADE (151 aa). Residues Thr736 and Thr859 each carry the phosphothreonine modification.

As to quaternary structure, binds with a high affinity to glycophorin and with lower affinity to band III protein. Associates with the nuclear mitotic apparatus. Interacts with calmodulin. Interacts with CPAP. Interacts with DLG1. Also found to associate with contractile apparatus and tight junctions. Interacts with NUMA1; this interaction is negatively regulated by CDK1 during metaphase and promotes anaphase-specific localization of NUMA1 in symmetrically dividing cells. Interacts with ATP2B1; regulates small intestinal calcium absorption through regulation of membrane expression of ATP2B1. Phosphorylated at multiple sites by different protein kinases and each phosphorylation event selectively modulates the protein's functions. In terms of processing, phosphorylation on Tyr-660 reduces the ability of 4.1 to promote the assembly of the spectrin/actin/4.1 ternary complex. Post-translationally, O-glycosylated; contains N-acetylglucosamine side chains in the C-terminal domain.

Its subcellular location is the cytoplasm. It localises to the cytoskeleton. It is found in the cell cortex. The protein resides in the nucleus. In terms of biological role, protein 4.1 is a major structural element of the erythrocyte membrane skeleton. It plays a key role in regulating membrane physical properties of mechanical stability and deformability by stabilizing spectrin-actin interaction. Recruits DLG1 to membranes. Required for dynein-dynactin complex and NUMA1 recruitment at the mitotic cell cortex during anaphase. In Homo sapiens (Human), this protein is Protein 4.1.